Consider the following 234-residue polypeptide: Acetylxylan esterase 2 (234 aa).

The N-terminal stretch at methionine 1–alanine 17 is a signal peptide. The propeptide occupies isoleucine 18 to arginine 27. 2 disulfide bridges follow: cysteine 29-cysteine 106 and cysteine 73-cysteine 79. Residue serine 117 is part of the active site. 3 cysteine pairs are disulfide-bonded: cysteine 128-cysteine 188, cysteine 174-cysteine 206, and cysteine 198-cysteine 205. Aspartate 202 is a catalytic residue. Residue asparagine 207 is glycosylated (N-linked (GlcNAc...) asparagine). Histidine 214 is a catalytic residue.

This sequence belongs to the cutinase family. Acetylxylan esterase subfamily. In terms of assembly, monomer.

It localises to the secreted. It carries out the reaction Deacetylation of xylans and xylo-oligosaccharides.. Its pathway is glycan degradation; xylan degradation. Degrades acetylated xylans by cleaving acetyl side groups from the hetero-xylan backbone. The polypeptide is Acetylxylan esterase 2 (axe-2) (Talaromyces purpureogenus (Soft rot fungus)).